Here is a 1034-residue protein sequence, read N- to C-terminus: Ubiquitin-like-specific protease 2 (1034 aa).

Disordered regions lie at residues 1–42 (MSAR…FRKD), 71–110 (IELS…HSSL), 388–419 (SHAV…DDAT), 731–800 (IDQS…PIRH), 841–960 (GVSS…DSLG), and 983–1034 (SSPT…DEDP). Positions 19 to 33 (SSRASSPRSSASLPP) are enriched in low complexity. The span at 74-85 (SDNDVDNNDEGE) shows a compositional bias: acidic residues. The span at 743 to 756 (TSEPPCSRSSSIST) shows a compositional bias: low complexity. Ser-788 is subject to Phosphoserine. Polar residues-rich tracts occupy residues 845–856 (PIKNDQALSSTH), 876–904 (QLSS…VISD), and 912–923 (GVNSESKNTSGI). The residue at position 903 (Ser-903) is a Phosphoserine. A phosphoserine mark is found at Ser-983 and Ser-984. The span at 992 to 1017 (TSATSKGSNAQLLSNYGDENNQSQDS) shows a compositional bias: polar residues.

It belongs to the peptidase C48 family.

Its function is as follows. Insertion mutation in SMT4 confers temperature and benomyl sensitivity; high copy suppressor of a temperature sensitive mutation in MIF2. The sequence is that of Ubiquitin-like-specific protease 2 (ULP2) from Saccharomyces cerevisiae (strain ATCC 204508 / S288c) (Baker's yeast).